A 159-amino-acid polypeptide reads, in one-letter code: 2-C-methyl-D-erythritol 2,4-cyclodiphosphate synthase (159 aa).

Residues aspartate 10 and histidine 12 each contribute to the a divalent metal cation site. 4-CDP-2-C-methyl-D-erythritol 2-phosphate contacts are provided by residues 10 to 12 (DVH) and 36 to 37 (HS). Histidine 44 contacts a divalent metal cation. Residues 58–60 (DIG), 134–137 (TTSE), phenylalanine 141, and arginine 144 contribute to the 4-CDP-2-C-methyl-D-erythritol 2-phosphate site.

The protein belongs to the IspF family. Homotrimer. The cofactor is a divalent metal cation.

It catalyses the reaction 4-CDP-2-C-methyl-D-erythritol 2-phosphate = 2-C-methyl-D-erythritol 2,4-cyclic diphosphate + CMP. Its pathway is isoprenoid biosynthesis; isopentenyl diphosphate biosynthesis via DXP pathway; isopentenyl diphosphate from 1-deoxy-D-xylulose 5-phosphate: step 4/6. Involved in the biosynthesis of isopentenyl diphosphate (IPP) and dimethylallyl diphosphate (DMAPP), two major building blocks of isoprenoid compounds. Catalyzes the conversion of 4-diphosphocytidyl-2-C-methyl-D-erythritol 2-phosphate (CDP-ME2P) to 2-C-methyl-D-erythritol 2,4-cyclodiphosphate (ME-CPP) with a corresponding release of cytidine 5-monophosphate (CMP). The polypeptide is 2-C-methyl-D-erythritol 2,4-cyclodiphosphate synthase (Cereibacter sphaeroides (strain ATCC 17025 / ATH 2.4.3) (Rhodobacter sphaeroides)).